Consider the following 874-residue polypeptide: MSALSRWLLIPPVSARLSERYQGYRRHGASPFSAALGCLWTILAWIVFPLEHPRWQRIRDGHKALYPHINAARPRPLDPARYLIQTLWLVMISSTKERHEPRWRSFARLKDVRGRYHQWMDTLPERVRQKTTHLEKEKELGHLSNGARRFILGVIVTFSLILALICITQPFNPLSQFIFLLLLWGVALLVRRMPGRFSALMLIVLSLTVSCRYIWWRYTSTLNWDDPVSLVCGLILLFAETYAWIVLVLGYFQVVWPLNRQPVPLPKEMSQWPTVDIFVPTYNEDLNVVKNTIYASLGIDWPKDKLNIWILDDGGRESFRHFARHVGVHYIARTTHEHAKAGNINNALKHAKGEFVAIFDCDHVPTRSFLQMTMGWFLKEKQLAMMQTPHHFFSPDPFERNLGRFRKTPNEGTLFYGLVQDGNDMWDATFFCGSCAVIRRKPLDEIGGIAVETVTEDAHTSLRLHRRGYTSAYMRIPQAAGLATESLSAHIGQRIRWARGMVQIFRLDNPLFGKGLKLAQRLCYLNAMFHFLSGIPRLIFLTAPLAFLLLHAYIIYAPALMIALFVIPHMVHASLTNSKIQGKYRHSFWSEIYETVLAWYIAPPTLVALINPHKGKFNVTAKGGLVEEKYVDWVISRPYIFLVLLNLLGVAAGVWRYYYGPENETLTVIVSLVWVFYNLVILGGAVAVSVESKQVRRAHRVEIAMPGAIAREDGHLFSCTVHDFSDGGLGIKINGQAQVLEGQKVNLLLKRGQQEYVFPTQVVRVTGNEVGLQLMPLTTKQHIDFVQCTFARADTWALWQDSFPEDKPLESLLDILKLGFRGYRHLAEFAPPSVKVIFRSLTALIAWIVSFIPRRPERQAAIQPSDRVMAQAQQ.

Transmembrane regions (helical) follow at residues 30–50, 151–171, 173–193, and 230–250; these read SPFS…VFPL, ILGV…TQPF, PLSQ…VRRM, and LVCG…LVLG. Residues 271–364 form a catalytic subdomain A region; it reads QWPTVDIFVP…FVAIFDCDHV (94 aa). D313 is an active-site residue. Positions 360 and 362 each coordinate substrate. The segment at 441-501 is catalytic subdomain B; that stretch reads KPLDEIGGIA…GQRIRWARGM (61 aa). Residue D457 is part of the active site. 5 helical membrane passes run 525-545, 547-567, 592-612, 634-654, and 668-688; these read LNAM…TAPL, FLLL…LFVI, IYET…LINP, VISR…AAGV, and VIVS…AVAV. In terms of domain architecture, PilZ spans 694-790; sequence QVRRAHRVEI…QHIDFVQCTF (97 aa). A helical transmembrane segment spans residues 833-853; the sequence is SVKVIFRSLTALIAWIVSFIP.

Belongs to the glycosyltransferase 2 family. Mg(2+) serves as cofactor.

Its subcellular location is the cell inner membrane. The catalysed reaction is [(1-&gt;4)-beta-D-glucosyl](n) + UDP-alpha-D-glucose = [(1-&gt;4)-beta-D-glucosyl](n+1) + UDP + H(+). Its pathway is glycan metabolism; bacterial cellulose biosynthesis. Activated by bis-(3'-5') cyclic diguanylic acid (c-di-GMP). In terms of biological role, catalytic subunit of cellulose synthase. It polymerizes uridine 5'-diphosphate glucose to cellulose, which is produced as an extracellular component for mechanical and chemical protection at the onset of the stationary phase, when the cells exhibit multicellular behavior (rdar morphotype). Coexpression of cellulose and thin aggregative fimbriae leads to a hydrophobic network with tightly packed cells embedded in a highly inert matrix. This Salmonella typhimurium (strain LT2 / SGSC1412 / ATCC 700720) protein is Cellulose synthase catalytic subunit [UDP-forming] (bcsA).